The chain runs to 525 residues: Plant UBX domain-containing protein 13 (525 aa).

One can recognise a UBA-like domain in the interval alanine 2–histidine 44. Disordered regions lie at residues arginine 67–valine 96, aspartate 150–asparagine 172, and methionine 194–aspartate 328. The span at alanine 209–serine 229 shows a compositional bias: basic and acidic residues. The span at serine 254–proline 274 shows a compositional bias: acidic residues. Serine 362 bears the Phosphoserine mark. Residues leucine 380–leucine 436 are a coiled coil. Over residues alanine 408–valine 430 the composition is skewed to basic and acidic residues. Residues alanine 408–asparagine 446 form a disordered region. The UBX domain maps to glycine 443–phenylalanine 521.

In Arabidopsis thaliana (Mouse-ear cress), this protein is Plant UBX domain-containing protein 13.